Consider the following 311-residue polypeptide: Probable dihydroorotate dehydrogenase A (fumarate) (311 aa).

Substrate contacts are provided by residues Lys45, 69-73 (NSMGL), and Asn128. 45–46 (KT) provides a ligand contact to FMN. Asn128 serves as a coordination point for FMN. The Nucleophile role is filled by Cys131. FMN is bound by residues Lys165 and Val193. 194–195 (NS) lines the substrate pocket. FMN contacts are provided by residues Gly220, 248-249 (GG), and 270-271 (GT).

The protein belongs to the dihydroorotate dehydrogenase family. Type 1 subfamily. In terms of assembly, homodimer. FMN serves as cofactor.

The protein localises to the cytoplasm. The catalysed reaction is (S)-dihydroorotate + fumarate = orotate + succinate. Its pathway is pyrimidine metabolism; UMP biosynthesis via de novo pathway. Functionally, catalyzes the conversion of dihydroorotate to orotate with fumarate as the electron acceptor. In Streptococcus pneumoniae (strain ATCC BAA-255 / R6), this protein is Probable dihydroorotate dehydrogenase A (fumarate) (pyrDA).